Consider the following 225-residue polypeptide: Phosphoglycolate phosphatase (225 aa).

The active-site Nucleophile is the Asp-11. Mg(2+) contacts are provided by Asp-11, Asp-13, and Asp-174.

Belongs to the HAD-like hydrolase superfamily. CbbY/CbbZ/Gph/YieH family. The cofactor is Mg(2+).

It carries out the reaction 2-phosphoglycolate + H2O = glycolate + phosphate. It functions in the pathway organic acid metabolism; glycolate biosynthesis; glycolate from 2-phosphoglycolate: step 1/1. In terms of biological role, specifically catalyzes the dephosphorylation of 2-phosphoglycolate. Is involved in the dissimilation of the intracellular 2-phosphoglycolate formed during the DNA repair of 3'-phosphoglycolate ends, a major class of DNA lesions induced by oxidative stress. In Nitrosococcus oceani (strain ATCC 19707 / BCRC 17464 / JCM 30415 / NCIMB 11848 / C-107), this protein is Phosphoglycolate phosphatase.